The sequence spans 54 residues: LVTVDCSDYPKPSCTLEDKPLCGSDNQTYSNKCSFCNAVVDSNGTLTLSHFGKC.

A Kazal-like domain is found at 4-54; the sequence is VDCSDYPKPSCTLEDKPLCGSDNQTYSNKCSFCNAVVDSNGTLTLSHFGKC. 3 cysteine pairs are disulfide-bonded: cysteine 6/cysteine 36, cysteine 14/cysteine 33, and cysteine 22/cysteine 54. A glycan (N-linked (GlcNAc...) asparagine) is linked at asparagine 43.

The protein resides in the secreted. The chain is Ovomucoid from Megapodius freycinet (Dusky scrubfowl).